A 202-amino-acid polypeptide reads, in one-letter code: Na(+)-translocating NADH-quinone reductase subunit E (202 aa).

Helical transmembrane passes span 11-31, 39-59, 79-99, 114-134, 144-164, and 180-200; these read SIFI…YLAV, MGLG…NNLL, LTFV…QILE, GIFL…LFMV, VTFG…LAGI, and LGIT…FSGI.

This sequence belongs to the NqrDE/RnfAE family. In terms of assembly, composed of six subunits; NqrA, NqrB, NqrC, NqrD, NqrE and NqrF.

Its subcellular location is the cell inner membrane. It catalyses the reaction a ubiquinone + n Na(+)(in) + NADH + H(+) = a ubiquinol + n Na(+)(out) + NAD(+). Its function is as follows. NQR complex catalyzes the reduction of ubiquinone-1 to ubiquinol by two successive reactions, coupled with the transport of Na(+) ions from the cytoplasm to the periplasm. NqrA to NqrE are probably involved in the second step, the conversion of ubisemiquinone to ubiquinol. This is Na(+)-translocating NADH-quinone reductase subunit E from Maridesulfovibrio salexigens (strain ATCC 14822 / DSM 2638 / NCIMB 8403 / VKM B-1763) (Desulfovibrio salexigens).